Reading from the N-terminus, the 501-residue chain is Cytochrome P450 4d2 (501 aa).

Heme is bound by residues Glu311 and Cys449.

This sequence belongs to the cytochrome P450 family. The cofactor is heme.

Its subcellular location is the endoplasmic reticulum membrane. It is found in the microsome membrane. In terms of biological role, involved in the metabolism of insect hormones and in the breakdown of synthetic insecticides. The sequence is that of Cytochrome P450 4d2 (Cyp4d2) from Drosophila melanogaster (Fruit fly).